The following is a 61-amino-acid chain: Short neurotoxin 1 (61 aa).

Polar residues predominate over residues 1–16; sequence LECHNQQSSQPPTTKS. The interval 1 to 20 is disordered; the sequence is LECHNQQSSQPPTTKSCPGD. Cystine bridges form between cysteine 3/cysteine 23, cysteine 17/cysteine 40, cysteine 42/cysteine 53, and cysteine 54/cysteine 59.

This sequence belongs to the three-finger toxin family. Short-chain subfamily. Type I alpha-neurotoxin sub-subfamily. Expressed by the venom gland.

Its subcellular location is the secreted. Its function is as follows. Binds to muscle nicotinic acetylcholine receptor (nAChR) and inhibit acetylcholine from binding to the receptor, thereby impairing neuromuscular transmission. The sequence is that of Short neurotoxin 1 from Hemachatus haemachatus (Rinkhals).